Consider the following 227-residue polypeptide: Nucleoside triphosphate pyrophosphatase (227 aa).

D77 serves as the catalytic Proton acceptor.

Belongs to the Maf family. It depends on a divalent metal cation as a cofactor.

The protein resides in the cytoplasm. The enzyme catalyses a ribonucleoside 5'-triphosphate + H2O = a ribonucleoside 5'-phosphate + diphosphate + H(+). The catalysed reaction is a 2'-deoxyribonucleoside 5'-triphosphate + H2O = a 2'-deoxyribonucleoside 5'-phosphate + diphosphate + H(+). In terms of biological role, nucleoside triphosphate pyrophosphatase. May have a dual role in cell division arrest and in preventing the incorporation of modified nucleotides into cellular nucleic acids. In Rickettsia typhi (strain ATCC VR-144 / Wilmington), this protein is Nucleoside triphosphate pyrophosphatase.